A 173-amino-acid chain; its full sequence is Photosystem I assembly protein Ycf3 (173 aa).

TPR repeat units follow at residues 35-68 (AFAY…EDDP), 72-105 (SYIL…NPRM), and 120-153 (GEKA…APNN).

It belongs to the Ycf3 family.

It localises to the cellular thylakoid membrane. Functionally, essential for the assembly of the photosystem I (PSI) complex. May act as a chaperone-like factor to guide the assembly of the PSI subunits. The chain is Photosystem I assembly protein Ycf3 from Trichodesmium erythraeum (strain IMS101).